The following is a 100-amino-acid chain: MARKSLIQREKKRQKLEQKYHLIRRSSKKEISKVPSLNEKWKIHGKLQSLPRNSAPIRLHRRCFSTGRPRANYRDFGLSGHILREMVQACLLPGATRSSW.

Belongs to the universal ribosomal protein uS14 family. In terms of assembly, part of the 30S ribosomal subunit.

The protein resides in the plastid. Its subcellular location is the chloroplast. Its function is as follows. Binds 16S rRNA, required for the assembly of 30S particles. The polypeptide is Small ribosomal subunit protein uS14c (Morus indica (Mulberry)).